The following is a 393-amino-acid chain: tRNA(Met) cytidine acetate ligase (393 aa).

ATP contacts are provided by glycine 81, asparagine 142, and arginine 167.

This sequence belongs to the TmcAL family.

It is found in the cytoplasm. The catalysed reaction is cytidine(34) in elongator tRNA(Met) + acetate + ATP = N(4)-acetylcytidine(34) in elongator tRNA(Met) + AMP + diphosphate. Catalyzes the formation of N(4)-acetylcytidine (ac(4)C) at the wobble position of elongator tRNA(Met), using acetate and ATP as substrates. First activates an acetate ion to form acetyladenylate (Ac-AMP) and then transfers the acetyl group to tRNA to form ac(4)C34. This Bacillus cereus (strain AH820) protein is tRNA(Met) cytidine acetate ligase.